Reading from the N-terminus, the 107-residue chain is uncharacterized protein (107 aa).

Positions Glu-88–Lys-97 are enriched in basic and acidic residues. The disordered stretch occupies residues Glu-88 to Trp-107. Positions Lys-98–Trp-107 are enriched in basic residues.

This is an uncharacterized protein from Methanocaldococcus jannaschii (strain ATCC 43067 / DSM 2661 / JAL-1 / JCM 10045 / NBRC 100440) (Methanococcus jannaschii).